A 95-amino-acid chain; its full sequence is MTKSELIEKLADKLSHLSAKEVEKSIKEILELMAQSLSKGERIEIRGFGSFSLHYRAPRVGRNPKTGESVELSGKYVPHFKPGKELRERVNLSVA.

This sequence belongs to the bacterial histone-like protein family. Heterodimer of an alpha and a beta chain.

Its function is as follows. This protein is one of the two subunits of integration host factor, a specific DNA-binding protein that functions in genetic recombination as well as in transcriptional and translational control. This Colwellia psychrerythraea (strain 34H / ATCC BAA-681) (Vibrio psychroerythus) protein is Integration host factor subunit beta.